The following is a 183-amino-acid chain: Intraflagellar transport protein 27 homolog (183 aa).

GTP is bound by residues 12–19 (GAPTVGKT), 63–67 (DVSGQ), and 120–123 (NKSD).

This sequence belongs to the small GTPase superfamily. Rab family. As to quaternary structure, component of the IFT complex B.

It is found in the cell projection. Its subcellular location is the cilium. The protein localises to the flagellum. In terms of biological role, small GTPase-like component of the intraflagellar transport (IFT) complex B required for both anterograde and retrograde intraflagellar transport. May be involved in cargo loading of the retrograde transport. The chain is Intraflagellar transport protein 27 homolog from Trypanosoma brucei brucei (strain 927/4 GUTat10.1).